The following is a 416-amino-acid chain: Homeobox even-skipped homolog protein 1 (416 aa).

2 disordered regions span residues 30–120 (AVSS…SDFY) and 138–178 (YQHS…LACS). The segment covering 72 to 82 (GLAGSAAGLGA) has biased composition (low complexity). Residues 102 to 114 (DSLSGQGQPSSSD) show a composition bias toward polar residues. Residues 183–242 (MRRYRTAFTREQIARLEKEFYRENYVSRPRRCELAAALNLPETTIKVWFQNRRMKDKRQR) constitute a DNA-binding region (homeobox).

Belongs to the even-skipped homeobox family.

The protein resides in the nucleus. May play a role in the specification of neuronal cell types. May play a role in the dorsoventral specification of mesodermal cell fate. The polypeptide is Homeobox even-skipped homolog protein 1 (Evx1) (Mus musculus (Mouse)).